The chain runs to 410 residues: Peptidase T (410 aa).

Residue histidine 79 participates in Zn(2+) binding. Residue aspartate 81 is part of the active site. Residue aspartate 142 participates in Zn(2+) binding. Glutamate 176 (proton acceptor) is an active-site residue. Zn(2+) is bound by residues glutamate 177, aspartate 199, and histidine 381.

This sequence belongs to the peptidase M20B family. The cofactor is Zn(2+).

It is found in the cytoplasm. It catalyses the reaction Release of the N-terminal residue from a tripeptide.. Its function is as follows. Cleaves the N-terminal amino acid of tripeptides. In Listeria welshimeri serovar 6b (strain ATCC 35897 / DSM 20650 / CCUG 15529 / CIP 8149 / NCTC 11857 / SLCC 5334 / V8), this protein is Peptidase T.